Consider the following 220-residue polypeptide: Germin-like protein subfamily 2 member 4 (220 aa).

The first 21 residues, 1–21, serve as a signal peptide directing secretion; that stretch reads MDSRCFGFFFTLLSLNVIVLA. Cys-31 and Cys-46 form a disulfide bridge. N-linked (GlcNAc...) asparagine glycans are attached at residues Asn-51 and Asn-69. The region spanning 58 to 209 is the Cupin type-1 domain; it reads FFAGIGKPAV…TFQIGTKEIE (152 aa). 4 residues coordinate Mn(2+): His-108, His-110, Glu-115, and His-154.

This sequence belongs to the germin family. Oligomer (believed to be a pentamer but probably hexamer).

The protein resides in the secreted. The protein localises to the extracellular space. Its subcellular location is the apoplast. Functionally, may play a role in plant defense. Probably has no oxalate oxidase activity even if the active site is conserved. This Arabidopsis thaliana (Mouse-ear cress) protein is Germin-like protein subfamily 2 member 4 (GLP10).